Here is a 231-residue protein sequence, read N- to C-terminus: Ureidoacrylate amidohydrolase RutB (231 aa).

Catalysis depends on aspartate 25, which acts as the Proton acceptor. Lysine 134 is an active-site residue. The active-site Nucleophile is the cysteine 167.

This sequence belongs to the isochorismatase family. RutB subfamily.

The catalysed reaction is (Z)-3-ureidoacrylate + H2O + H(+) = (Z)-3-aminoacrylate + NH4(+) + CO2. The enzyme catalyses (Z)-3-ureidoacrylate + H2O = (Z)-3-aminoacrylate + carbamate + H(+). It catalyses the reaction (Z)-2-methylureidoacrylate + H2O + H(+) = (Z)-2-methylaminoacrylate + NH4(+) + CO2. Its function is as follows. Hydrolyzes ureidoacrylate to form aminoacrylate and carbamate. The carbamate hydrolyzes spontaneously, thereby releasing one of the nitrogen atoms of the pyrimidine ring as ammonia and one of its carbon atoms as CO2. This Escherichia coli O157:H7 (strain EC4115 / EHEC) protein is Ureidoacrylate amidohydrolase RutB.